The chain runs to 449 residues: Chromosomal replication initiator protein DnaA (449 aa).

The tract at residues 1–75 (MDTNNDIEKR…EILSQNKVGM (75 aa)) is domain I, interacts with DnaA modulators. The domain II stretch occupies residues 75 to 106 (MHLAHSVDVRIEVASKVHVSDHSNINYKATKS). The segment at 107-321 (SIKDSYTFEN…GAIIKISVNA (215 aa)) is domain III, AAA+ region. ATP is bound by residues Gly151, Gly153, Lys154, and Thr155. The tract at residues 322-449 (NLMNAPIDLN…LNELNDKKQH (128 aa)) is domain IV, binds dsDNA.

It belongs to the DnaA family. As to quaternary structure, oligomerizes as a right-handed, spiral filament on DNA at oriC.

It is found in the cytoplasm. Functionally, plays an essential role in the initiation and regulation of chromosomal replication. ATP-DnaA binds to the origin of replication (oriC) to initiate formation of the DNA replication initiation complex once per cell cycle. Binds the DnaA box (a 9 base pair repeat at the origin) and separates the double-stranded (ds)DNA. Forms a right-handed helical filament on oriC DNA; dsDNA binds to the exterior of the filament while single-stranded (ss)DNA is stabiized in the filament's interior. The ATP-DnaA-oriC complex binds and stabilizes one strand of the AT-rich DNA unwinding element (DUE), permitting loading of DNA polymerase. After initiation quickly degrades to an ADP-DnaA complex that is not apt for DNA replication. Binds acidic phospholipids. This Helicobacter acinonychis (strain Sheeba) protein is Chromosomal replication initiator protein DnaA.